The primary structure comprises 427 residues: Peptidase B (427 aa).

The Mn(2+) site is built by K195 and D200. K207 is a catalytic residue. Mn(2+) is bound by residues D218, D277, and E279. Residue R281 is part of the active site.

The protein belongs to the peptidase M17 family. Homohexamer. It depends on Mn(2+) as a cofactor.

It is found in the cytoplasm. It carries out the reaction Release of an N-terminal amino acid, Xaa, from a peptide or arylamide. Xaa is preferably Glu or Asp but may be other amino acids, including Leu, Met, His, Cys and Gln.. In terms of biological role, probably plays an important role in intracellular peptide degradation. The chain is Peptidase B from Escherichia coli (strain K12 / MC4100 / BW2952).